Consider the following 554-residue polypeptide: Formate--tetrahydrofolate ligase (554 aa).

65 to 72 serves as a coordination point for ATP; sequence TPAGEGKT.

Belongs to the formate--tetrahydrofolate ligase family.

It carries out the reaction (6S)-5,6,7,8-tetrahydrofolate + formate + ATP = (6R)-10-formyltetrahydrofolate + ADP + phosphate. It functions in the pathway one-carbon metabolism; tetrahydrofolate interconversion. In Petrotoga mobilis (strain DSM 10674 / SJ95), this protein is Formate--tetrahydrofolate ligase.